A 170-amino-acid polypeptide reads, in one-letter code: Ureidoglycolate lyase (170 aa).

The protein belongs to the ureidoglycolate lyase family. As to quaternary structure, homodimer. Ni(2+) is required as a cofactor.

The enzyme catalyses (S)-ureidoglycolate = urea + glyoxylate. It functions in the pathway nitrogen metabolism; (S)-allantoin degradation. Functionally, catalyzes the catabolism of the allantoin degradation intermediate (S)-ureidoglycolate, generating urea and glyoxylate. Involved in the utilization of allantoin as nitrogen source. The polypeptide is Ureidoglycolate lyase (Pseudomonas syringae pv. syringae (strain B728a)).